A 279-amino-acid polypeptide reads, in one-letter code: Large ribosomal subunit protein uL2 (279 aa).

The segment at 222-279 is disordered; sequence GVAMNPVDHPHGGGEGRTSGGRHPVTPAGKPTKGAKTRVNKATDKFIIRSRHKAKKGR. The span at 269 to 279 shows a compositional bias: basic residues; sequence IRSRHKAKKGR.

This sequence belongs to the universal ribosomal protein uL2 family. As to quaternary structure, part of the 50S ribosomal subunit. Forms a bridge to the 30S subunit in the 70S ribosome.

One of the primary rRNA binding proteins. Required for association of the 30S and 50S subunits to form the 70S ribosome, for tRNA binding and peptide bond formation. It has been suggested to have peptidyltransferase activity; this is somewhat controversial. Makes several contacts with the 16S rRNA in the 70S ribosome. This chain is Large ribosomal subunit protein uL2, found in Caulobacter vibrioides (strain ATCC 19089 / CIP 103742 / CB 15) (Caulobacter crescentus).